A 795-amino-acid chain; its full sequence is Lon protease 1 (795 aa).

Residues 9–204 form the Lon N-terminal domain; sequence LPVLPLRNTV…RVLALLLRDL (196 aa). Position 360–367 (360–367) interacts with ATP; the sequence is GPPGVGKT. Residues 596–777 enclose the Lon proteolytic domain; it reads EPQVGAAQGL…GEVLKLLLLP (182 aa). Catalysis depends on residues Ser683 and Lys726.

The protein belongs to the peptidase S16 family. Homohexamer. Organized in a ring with a central cavity.

The protein localises to the cytoplasm. It carries out the reaction Hydrolysis of proteins in presence of ATP.. In terms of biological role, ATP-dependent serine protease that mediates the selective degradation of mutant and abnormal proteins as well as certain short-lived regulatory proteins. Required for cellular homeostasis and for survival from DNA damage and developmental changes induced by stress. Degrades polypeptides processively to yield small peptide fragments that are 5 to 10 amino acids long. Binds to DNA in a double-stranded, site-specific manner. The chain is Lon protease 1 from Thermus thermophilus (strain ATCC BAA-163 / DSM 7039 / HB27).